The chain runs to 599 residues: Zinc finger BED domain-containing protein 3 (599 aa).

Positions 70 to 104 are disordered; that stretch reads LNGGMGSPGNGPGTPLSRNNYAHHHQQHQNQQHVG. Residues 72–81 show a composition bias toward gly residues; the sequence is GGMGSPGNGP. The BED-type zinc finger occupies 123 to 176; sequence VKTAKVWRYFDELPTIEQAAECRICRKKIKATNSSTTGMIRHLRSCHVQEYQLV. Zn(2+) is bound by residues Cys-144, Cys-147, His-164, and His-169. 2 disordered regions span residues 208–283 and 440–491; these read GIEN…QCQN and ATSS…SSID. 2 stretches are compositionally biased toward low complexity: residues 223–246 and 268–283; these read SQKS…SHFS and SNSI…QCQN. The span at 440–455 shows a compositional bias: polar residues; it reads ATSSYEDVSVNESQMA. A compositionally biased stretch (acidic residues) spans 460–483; that stretch reads GDEEEEIMEEEVEEDENVEIEDDT.

Expressed in neuronal cell bodies in the ventral cord and HSN neurons.

It is found in the nucleus. In terms of biological role, probable transcription factor. Involved in vulval organogenesis. During vulval development, may play a role in the regulation of cell cycle regulators such as cul-1. Positively modulates expression of homeobox protein lin-39, perhaps by binding to regulatory regions of the lin-39 gene, acting in the vulval lineage. Plays a role in larval molting. The sequence is that of Zinc finger BED domain-containing protein 3 from Caenorhabditis elegans.